The following is a 191-amino-acid chain: GDP-mannose pyrophosphatase (191 aa).

GDP-alpha-D-mannose is bound by residues Y17, 38-40, R67, and 85-87; these read KRE and AGL. The region spanning 43-180 is the Nudix hydrolase domain; sequence DRGNGATILL…EIRDGKTVLL (138 aa). Mg(2+) contacts are provided by A85, E100, and E104. Positions 86–106 match the Nudix box motif; that stretch reads GLLDNDEPEVCIRKEAIEETG. GDP-alpha-D-mannose-binding positions include E104, E127, 150–151, and K176; that span reads DE. Residue E151 participates in Mg(2+) binding.

Belongs to the Nudix hydrolase family. NudK subfamily. As to quaternary structure, homodimer. The cofactor is Mg(2+).

It catalyses the reaction GDP-alpha-D-mannose + H2O = alpha-D-mannose 1-phosphate + GMP + 2 H(+). In terms of biological role, nucleoside diphosphate sugar hydrolase that hydrolyzes GDP-mannose as its preferred substrate, yielding GMP and mannose-1-phosphate. The sequence is that of GDP-mannose pyrophosphatase (nudK) from Escherichia coli (strain UTI89 / UPEC).